A 150-amino-acid polypeptide reads, in one-letter code: Catabolic 3-dehydroquinase 1 (150 aa).

Y24 acts as the Proton acceptor in catalysis. 3 residues coordinate substrate: N75, H81, and D88. H101 functions as the Proton donor in the catalytic mechanism. Residues 102–103 and R112 contribute to the substrate site; that span reads VS.

The protein belongs to the type-II 3-dehydroquinase family. Homododecamer. Adopts a ring-like structure, composed of an arrangement of two hexameric rings stacked on top of one another.

The enzyme catalyses 3-dehydroquinate = 3-dehydroshikimate + H2O. Its pathway is aromatic compound metabolism; 3,4-dihydroxybenzoate biosynthesis; 3,4-dihydroxybenzoate from 3-dehydroquinate: step 1/2. Functionally, is involved in the catabolism of quinate. Allows the utilization of quinate as carbon source via the beta-ketoadipate pathway. The sequence is that of Catabolic 3-dehydroquinase 1 from Neosartorya fischeri (strain ATCC 1020 / DSM 3700 / CBS 544.65 / FGSC A1164 / JCM 1740 / NRRL 181 / WB 181) (Aspergillus fischerianus).